We begin with the raw amino-acid sequence, 512 residues long: Cytochrome P450 72A11 (512 aa).

The chain crosses the membrane as a helical span at residues glutamate 2–tryptophan 22. Cysteine 460 is a binding site for heme.

It belongs to the cytochrome P450 family. Heme is required as a cofactor.

It localises to the membrane. The sequence is that of Cytochrome P450 72A11 (CYP72A11) from Arabidopsis thaliana (Mouse-ear cress).